The primary structure comprises 20 residues: Ribulose bisphosphate carboxylase small subunit (20 aa).

This sequence belongs to the RuBisCO small chain family. As to quaternary structure, heterohexadecamer of 8 large and 8 small subunits.

It localises to the plastid. Its subcellular location is the chloroplast. Functionally, ruBisCO catalyzes two reactions: the carboxylation of D-ribulose 1,5-bisphosphate, the primary event in carbon dioxide fixation, as well as the oxidative fragmentation of the pentose substrate in the photorespiration process. Both reactions occur simultaneously and in competition at the same active site. Although the small subunit is not catalytic it is essential for maximal activity. In Chattonella marina var. antiqua (Red tide flagellate), this protein is Ribulose bisphosphate carboxylase small subunit.